The following is a 143-amino-acid chain: Actin-depolymerizing factor 5 (143 aa).

The ADF-H domain occupies 11-143; that stretch reads GMRVTDECTS…GFDIIQDRAK (133 aa).

The protein belongs to the actin-binding proteins ADF family. In terms of tissue distribution, expressed exclusively in root tip meristem.

Its subcellular location is the cytoplasm. The protein localises to the cytoskeleton. Functionally, actin-depolymerizing protein. Severs actin filaments (F-actin) and binds to actin monomers. This chain is Actin-depolymerizing factor 5 (ADF5), found in Arabidopsis thaliana (Mouse-ear cress).